A 1959-amino-acid chain; its full sequence is Zinc finger protein hangover (1959 aa).

A ZAD domain is found at 79 to 155; that stretch reads NCCRLCIAPQ…FSSQAKQRQW (77 aa). Zn(2+) is bound by residues cysteine 81, cysteine 84, cysteine 128, and cysteine 131. Residues 178–208 are disordered; it reads GFFDQHLHQQQQHHQHLENELEAEKEKATPT. A compositionally biased stretch (basic and acidic residues) spans 192-205; sequence QHLENELEAEKEKA. Phosphoserine is present on serine 228. Threonine 246 is subject to Phosphothreonine. A C2H2-type 1 zinc finger spans residues 318–341; it reads ASCRACSLQFSTRANARRHERNLH. The C2H2-type 2; degenerate zinc-finger motif lies at 447–469; it reads MTCRCCNKYFSTYKNFMAHVRKK. The segment at 581–604 adopts a C2H2-type 3 zinc-finger fold; it reads YECKLCPKGFRTKHEFRTHVYDKH. The segment at 674–762 is disordered; sequence AVSDNASTTG…ANRDASAPKS (89 aa). Residues 677 to 693 show a composition bias toward polar residues; sequence DNASTTGSGMARSNSME. Serine 680 bears the Phosphoserine mark. Low complexity-rich tracts occupy residues 716 to 727 and 741 to 759; these read SSSAAPPLTSTP and TSAS…DASA. 2 consecutive C2H2-type zinc fingers follow at residues 770-793 and 801-824; these read QVCP…ESKH and YKCV…INVH. Serine 832, serine 894, serine 895, serine 898, and serine 899 each carry phosphoserine. A C2H2-type 6 zinc finger spans residues 908–930; the sequence is KECPICNAVFSNNIGLSNHMRSH. Residues 960–991 form a disordered region; that stretch reads TDSELGVGGTMSESAPATPANVPPAMANQTPQ. 5 C2H2-type zinc fingers span residues 1011–1034, 1042–1065, 1078–1101, 1154–1176, and 1184–1207; these read MRCR…LTDH, IKCK…FKVH, FECD…RSVH, YQCK…INSH, and YSCK…YKKH. Positions 1233-1253 are enriched in polar residues; it reads TPTCNRKPITSTGAHQQQDGQ. Residues 1233-1301 are disordered; it reads TPTCNRKPIT…GNGTTVGVAS (69 aa). Basic residues predominate over residues 1255–1267; sequence HSHHTAKRTIFRH. Over residues 1271–1283 the composition is skewed to acidic residues; that stretch reads DDDDEEDDDEQQQ. 2 consecutive C2H2-type zinc fingers follow at residues 1318-1340 and 1375-1397; these read VACT…IQKH and YACD…RKWH. A compositionally biased stretch (low complexity) spans 1445 to 1467; sequence QQSLNNSCNSSMNHNNNSSSNRS. The segment at 1445 to 1471 is disordered; the sequence is QQSLNNSCNSSMNHNNNSSSNRSKSMK. 2 C2H2-type zinc fingers span residues 1476-1499 and 1552-1574; these read LKCE…YELH and WGCD…INNH. The segment at 1627–1865 is disordered; sequence AAGATTTDKL…STGERRKKAV (239 aa). Acidic residues predominate over residues 1639–1695; it reads PDEEDSDDLDEDSSGDDDDSSGTGDDDDDDDSDDDEDGEGEDEDEEGDGGEGEDEEG. The segment covering 1697–1715 has biased composition (low complexity); that stretch reads QPPAQLLPQQQHKTDLNLN. Acidic residues-rich tracts occupy residues 1716 to 1758 and 1782 to 1829; these read QDDD…EEPE and SDDE…EDEP. Residues 1833-1851 show a composition bias toward low complexity; the sequence is STASFSESESSTTTTSNSH. Residues 1873 to 1895 form a C2H2-type 16 zinc finger; sequence FTCDLCQLCFDSQELLQSHIKSH. Residues 1933 to 1959 form a disordered region; that stretch reads PDSKSAVLANNNNSKTSSKTVAAGATN. A compositionally biased stretch (low complexity) spans 1942-1952; sequence NNNNSKTSSKT.

As to expression, expressed ubiquitously in the nervous system, in neurons not glia.

The protein resides in the nucleus. Functionally, required for normal development of ethanol tolerance. Relies on two distinct molecular pathways: a cellular stress pathway defined by hang, and a parallel pathway requiring octopamine. The chain is Zinc finger protein hangover (hang) from Drosophila melanogaster (Fruit fly).